Consider the following 128-residue polypeptide: Large ribosomal subunit protein uL22 (128 aa).

The protein belongs to the universal ribosomal protein uL22 family. As to quaternary structure, part of the 50S ribosomal subunit.

In terms of biological role, this protein binds specifically to 23S rRNA; its binding is stimulated by other ribosomal proteins, e.g. L4, L17, and L20. It is important during the early stages of 50S assembly. It makes multiple contacts with different domains of the 23S rRNA in the assembled 50S subunit and ribosome. Its function is as follows. The globular domain of the protein is located near the polypeptide exit tunnel on the outside of the subunit, while an extended beta-hairpin is found that lines the wall of the exit tunnel in the center of the 70S ribosome. The sequence is that of Large ribosomal subunit protein uL22 from Rhodopseudomonas palustris (strain BisB18).